A 268-amino-acid chain; its full sequence is Tryptophan synthase alpha chain (268 aa).

Active-site proton acceptor residues include E49 and D60.

The protein belongs to the TrpA family. In terms of assembly, tetramer of two alpha and two beta chains.

The catalysed reaction is (1S,2R)-1-C-(indol-3-yl)glycerol 3-phosphate + L-serine = D-glyceraldehyde 3-phosphate + L-tryptophan + H2O. It participates in amino-acid biosynthesis; L-tryptophan biosynthesis; L-tryptophan from chorismate: step 5/5. Functionally, the alpha subunit is responsible for the aldol cleavage of indoleglycerol phosphate to indole and glyceraldehyde 3-phosphate. This is Tryptophan synthase alpha chain from Escherichia coli O139:H28 (strain E24377A / ETEC).